The following is a 160-amino-acid chain: uncharacterized protein (160 aa).

An N-terminal signal peptide occupies residues 1 to 29 (MTGKTHIMGGIASCTAAAYYYGFDPVLMA). A run of 2 helical transmembrane segments spans residues 67 to 87 (TFTH…TYIP) and 137 to 157 (QLVL…LFHG).

To E.coli YdjM.

Its subcellular location is the cell membrane. This is an uncharacterized protein from Bacillus subtilis (strain 168).